Consider the following 645-residue polypeptide: 1,4-alpha-glucan branching enzyme GlgB (645 aa).

The active-site Nucleophile is the D309. E352 functions as the Proton donor in the catalytic mechanism. The tract at residues 619–645 is disordered; sequence VKTRKGSKKQDGSKTKVRSNVTSRGKR. Residues 636-645 are compositionally biased toward polar residues; the sequence is RSNVTSRGKR.

It belongs to the glycosyl hydrolase 13 family. GlgB subfamily. Monomer.

The catalysed reaction is Transfers a segment of a (1-&gt;4)-alpha-D-glucan chain to a primary hydroxy group in a similar glucan chain.. Its pathway is glycan biosynthesis; glycogen biosynthesis. Catalyzes the formation of the alpha-1,6-glucosidic linkages in glycogen by scission of a 1,4-alpha-linked oligosaccharide from growing alpha-1,4-glucan chains and the subsequent attachment of the oligosaccharide to the alpha-1,6 position. The chain is 1,4-alpha-glucan branching enzyme GlgB from Bacillus cereus (strain ATCC 14579 / DSM 31 / CCUG 7414 / JCM 2152 / NBRC 15305 / NCIMB 9373 / NCTC 2599 / NRRL B-3711).